The chain runs to 232 residues: Large ribosomal subunit protein uL1 (232 aa).

It belongs to the universal ribosomal protein uL1 family. As to quaternary structure, part of the 50S ribosomal subunit.

Binds directly to 23S rRNA. The L1 stalk is quite mobile in the ribosome, and is involved in E site tRNA release. Functionally, protein L1 is also a translational repressor protein, it controls the translation of the L11 operon by binding to its mRNA. This Bordetella bronchiseptica (strain ATCC BAA-588 / NCTC 13252 / RB50) (Alcaligenes bronchisepticus) protein is Large ribosomal subunit protein uL1.